A 478-amino-acid chain; its full sequence is Cytochrome c-552 (478 aa).

An N-terminal signal peptide occupies residues 1 to 26 (MARTILRARRFFSLILPFFFISSVYA). Histidine 94 is a binding site for heme c. Residues cysteine 122, cysteine 125, and lysine 126 each contribute to the heme site. Heme c contacts are provided by cysteine 160, cysteine 163, histidine 164, cysteine 209, cysteine 212, and histidine 213. The Ca(2+) site is built by glutamate 215, tyrosine 216, lysine 261, and glutamine 263. Tyrosine 216 contributes to the substrate binding site. Histidine 264 serves as a coordination point for substrate. Positions 275, 282, 285, 286, 301, 314, 317, 318, and 393 each coordinate heme c.

The protein belongs to the cytochrome c-552 family. Ca(2+) serves as cofactor. It depends on heme c as a cofactor.

Its subcellular location is the periplasm. It catalyses the reaction 6 Fe(III)-[cytochrome c] + NH4(+) + 2 H2O = 6 Fe(II)-[cytochrome c] + nitrite + 8 H(+). It participates in nitrogen metabolism; nitrate reduction (assimilation). Functionally, catalyzes the reduction of nitrite to ammonia, consuming six electrons in the process. The protein is Cytochrome c-552 of Citrobacter koseri (strain ATCC BAA-895 / CDC 4225-83 / SGSC4696).